Here is a 55-residue protein sequence, read N- to C-terminus: Large ribosomal subunit protein bL33m (55 aa).

This sequence belongs to the bacterial ribosomal protein bL33 family. Component of the mitochondrial large ribosomal subunit (mt-LSU). Mature yeast 74S mitochondrial ribosomes consist of a small (37S) and a large (54S) subunit. The 37S small subunit contains a 15S ribosomal RNA (15S mt-rRNA) and at least 32 different proteins. The 54S large subunit contains a 21S rRNA (21S mt-rRNA) and at least 45 different proteins. bL33m stabilizes the tRNA acceptor stem in the E-site.

It localises to the mitochondrion. In terms of biological role, component of the mitochondrial ribosome (mitoribosome), a dedicated translation machinery responsible for the synthesis of mitochondrial genome-encoded proteins, including at least some of the essential transmembrane subunits of the mitochondrial respiratory chain. The mitoribosomes are attached to the mitochondrial inner membrane and translation products are cotranslationally integrated into the membrane. This chain is Large ribosomal subunit protein bL33m (mrpl39), found in Schizosaccharomyces pombe (strain 972 / ATCC 24843) (Fission yeast).